A 514-amino-acid chain; its full sequence is Cardiolipin synthase 2 (514 aa).

Transmembrane regions (helical) follow at residues 7–27 (LIFF…FIDV), 41–61 (ILGI…CVIF), and 71–91 (LTWL…YLLF). PLD phosphodiesterase domains are found at residues 249–276 (INYR…GDEY) and 427–454 (EKGF…DMRS). Residues His-254, Lys-256, Asp-261, His-432, Lys-434, and Asp-439 contribute to the active site.

Belongs to the phospholipase D family. Cardiolipin synthase subfamily.

The protein localises to the cell membrane. The enzyme catalyses 2 a 1,2-diacyl-sn-glycero-3-phospho-(1'-sn-glycerol) = a cardiolipin + glycerol. Functionally, catalyzes the reversible phosphatidyl group transfer from one phosphatidylglycerol molecule to another to form cardiolipin (CL) (diphosphatidylglycerol) and glycerol. In Bacillus cereus (strain ATCC 14579 / DSM 31 / CCUG 7414 / JCM 2152 / NBRC 15305 / NCIMB 9373 / NCTC 2599 / NRRL B-3711), this protein is Cardiolipin synthase 2 (cls2).